The chain runs to 592 residues: Aspartate--tRNA(Asp/Asn) ligase (592 aa).

E175 provides a ligand contact to L-aspartate. The interval 199–202 (QQFK) is aspartate. L-aspartate contacts are provided by R221 and H451. 221-223 (RDE) is a binding site for ATP. E485 is a binding site for ATP. An L-aspartate-binding site is contributed by R492. An ATP-binding site is contributed by 537–540 (GIDR).

This sequence belongs to the class-II aminoacyl-tRNA synthetase family. Type 1 subfamily. Homodimer.

Its subcellular location is the cytoplasm. It catalyses the reaction tRNA(Asx) + L-aspartate + ATP = L-aspartyl-tRNA(Asx) + AMP + diphosphate. In terms of biological role, aspartyl-tRNA synthetase with relaxed tRNA specificity since it is able to aspartylate not only its cognate tRNA(Asp) but also tRNA(Asn). Reaction proceeds in two steps: L-aspartate is first activated by ATP to form Asp-AMP and then transferred to the acceptor end of tRNA(Asp/Asn). In Phenylobacterium zucineum (strain HLK1), this protein is Aspartate--tRNA(Asp/Asn) ligase.